A 498-amino-acid polypeptide reads, in one-letter code: Germ cell-less protein-like 2 (498 aa).

The Nuclear localization signal signature appears at 33-39 (SRKRKRN). In terms of domain architecture, BTB spans 90–160 (SDIKIRALGR…LYTDADLSIT (71 aa)).

In terms of assembly, interacts with CUL3.

The protein localises to the nucleus matrix. It participates in protein modification; protein ubiquitination. Possible function in spermatogenesis. Probable substrate-specific adapter of an E3 ubiquitin-protein ligase complex which mediates the ubiquitination and subsequent proteasomal degradation of target proteins. The sequence is that of Germ cell-less protein-like 2 (Gmcl2) from Mus musculus (Mouse).